Reading from the N-terminus, the 271-residue chain is Formamidopyrimidine-DNA glycosylase (271 aa).

Pro2 functions as the Schiff-base intermediate with DNA in the catalytic mechanism. Residue Glu3 is the Proton donor of the active site. The Proton donor; for beta-elimination activity role is filled by Lys58. The DNA site is built by His90, Arg108, and Arg151. The segment at 236 to 271 adopts an FPG-type; degenerate zinc-finger fold; that stretch reads QVYGRDGQPCHRDDGGTIRRFAQGGRSTWYCPRCQR. Arg261 functions as the Proton donor; for delta-elimination activity in the catalytic mechanism.

This sequence belongs to the FPG family. In terms of assembly, monomer. It depends on Zn(2+) as a cofactor.

It carries out the reaction Hydrolysis of DNA containing ring-opened 7-methylguanine residues, releasing 2,6-diamino-4-hydroxy-5-(N-methyl)formamidopyrimidine.. It catalyses the reaction 2'-deoxyribonucleotide-(2'-deoxyribose 5'-phosphate)-2'-deoxyribonucleotide-DNA = a 3'-end 2'-deoxyribonucleotide-(2,3-dehydro-2,3-deoxyribose 5'-phosphate)-DNA + a 5'-end 5'-phospho-2'-deoxyribonucleoside-DNA + H(+). In terms of biological role, involved in base excision repair of DNA damaged by oxidation or by mutagenic agents. Acts as a DNA glycosylase that recognizes and removes damaged bases. Has a preference for oxidized purines, such as 7,8-dihydro-8-oxoguanine (8-oxoG). Has AP (apurinic/apyrimidinic) lyase activity and introduces nicks in the DNA strand. Cleaves the DNA backbone by beta-delta elimination to generate a single-strand break at the site of the removed base with both 3'- and 5'-phosphates. The chain is Formamidopyrimidine-DNA glycosylase from Erythrobacter litoralis (strain HTCC2594).